The chain runs to 823 residues: Degenerin-like protein asic-1 (823 aa).

The Cytoplasmic segment spans residues 1–38 (MGKNSLKRALELDVVDFAEHTSAHGIPRAYVSTGWRRY). The chain crosses the membrane as a helical span at residues 39-59 (MWLLCFLFCLSCFGHQAYLIV). At 60-767 (ERFNRNDIIV…FGGQLGLWMG (708 aa)) the chain is on the extracellular side. Intrachain disulfides connect C86-C518 and C494-C501. N-linked (GlcNAc...) asparagine glycans are attached at residues N228, N326, N347, N415, and N486. N-linked (GlcNAc...) asparagine glycosylation is found at N527 and N546. Intrachain disulfides connect C604–C687, C625–C683, C629–C681, and C638–C664. Residues 767–769 (GVS) carry the GAS motif; ion selectivity filter motif. The helical transmembrane segment at 768–788 (VSVITIGEVACFFFEVFISLI) threads the bilayer. Topologically, residues 789-795 (SSNRTKR) are cytoplasmic.

It belongs to the amiloride-sensitive sodium channel (TC 1.A.6) family. As to quaternary structure, homotrimer. Heterotrimer; with other ASIC proteins producing channel with different properties.

It localises to the cell membrane. The protein localises to the postsynaptic cell membrane. It is found in the cell projection. The protein resides in the dendrite. It catalyses the reaction Na(+)(in) = Na(+)(out). The enzyme catalyses K(+)(in) = K(+)(out). It carries out the reaction Li(+)(in) = Li(+)(out). The catalysed reaction is Ca(2+)(in) = Ca(2+)(out). Functionally, forms voltage-independent, pH-gated trimeric sodium channels that act as postsynaptic excitatory receptors in the nervous system, playing a crucial role in regulating synaptic plasticity, learning, and memory. Promotes synaptic vesicle fusion to positively regulate the release of dopamine at dopaminergic neuron synapses. Displays high selectivity for sodium ions but can also permit the permeation of other cations. This Caenorhabditis elegans protein is Degenerin-like protein asic-1.